A 226-amino-acid polypeptide reads, in one-letter code: MSLLARLEQSVHENGGLIVSCQPVPGSPMDKPEIVAAMAQAAASAGAVAVRIEGIENLRTVRPHLSVPIIGIIKRDLTGSPVRITPYLQDVDALAQAGADIIAFDASFRSRPVDIDSLLTRIRLHGLLAMADCSTVNEGISCHQKGIEFIGTTLSGYTGPITPVEPDLAMVTQLSHAGCRVIAEGRYNTPALAANAIEHGAWAVTVGSAITRIEHICQWFSHAVRR.

Belongs to the NanE family.

The catalysed reaction is an N-acyl-D-glucosamine 6-phosphate = an N-acyl-D-mannosamine 6-phosphate. Its pathway is amino-sugar metabolism; N-acetylneuraminate degradation; D-fructose 6-phosphate from N-acetylneuraminate: step 3/5. Its function is as follows. Converts N-acetylmannosamine-6-phosphate (ManNAc-6-P) to N-acetylglucosamine-6-phosphate (GlcNAc-6-P). The chain is Putative N-acetylmannosamine-6-phosphate 2-epimerase 1 from Salmonella paratyphi A (strain ATCC 9150 / SARB42).